The chain runs to 608 residues: MLLDEIKRMSYDELKRLAEDIRKKITEVVLKNGGHLASNLGTIELTLALYRVFDPREDAIIWDTGHQAYTHKILTGRDELFHTIRTFGGLSGFVTRRESPLDWFGTGHAGTSIAAGLGFEKAFELLGEKRHVVVVIGDGALTSGMALEALNQLKNINSKMKIILNDNGMSISPNVGGLAYHLSKLRTSPIYLKGKKVLKKVLEKTEIGFEVEEEMKYLRDSLKGMIQGTNFFESLGLKYFGPFDGHNIELLEKVFKRIRDYDYSSVVHVVTKKGKGFTAAEKDPTKYHSASPSGKPKMLSYSDLLGHTLSGIAREDKKIVAITAAMADGTGLSIFQREHPDRFFDLGITEQTCVTFGAALGLHGMKPVVAIYSTFLQRAYDQIIHDVALQNAPVLFAIDRSGVVGEDGPTHHGLFDMNYLLSVPNMKIISPSSPEEFVSSLYTVLKHLDGPVAIRYPKESFYGEVEFFLENMKEIDLGWKILKRGREAAIIATGTILNEVLKIPLDVTVVNALTVKPLDTTVLKEIAREHDLIITVEEAMKIGGFGSFVAQRLQEMGWQGKIVNLGVEDIFVPHGSRKELLSMLGLDSEGLTKTVLTYIKARSREGKV.

Residues histidine 66 and 107–109 each bind thiamine diphosphate; that span reads GHA. Aspartate 138 is a binding site for Mg(2+). Thiamine diphosphate is bound by residues 139 to 140, asparagine 167, phenylalanine 277, and glutamate 350; that span reads GA. Asparagine 167 lines the Mg(2+) pocket.

The protein belongs to the transketolase family. DXPS subfamily. In terms of assembly, homodimer. Mg(2+) is required as a cofactor. Thiamine diphosphate serves as cofactor.

The enzyme catalyses D-glyceraldehyde 3-phosphate + pyruvate + H(+) = 1-deoxy-D-xylulose 5-phosphate + CO2. The protein operates within metabolic intermediate biosynthesis; 1-deoxy-D-xylulose 5-phosphate biosynthesis; 1-deoxy-D-xylulose 5-phosphate from D-glyceraldehyde 3-phosphate and pyruvate: step 1/1. Its function is as follows. Catalyzes the acyloin condensation reaction between C atoms 2 and 3 of pyruvate and glyceraldehyde 3-phosphate to yield 1-deoxy-D-xylulose-5-phosphate (DXP). The chain is 1-deoxy-D-xylulose-5-phosphate synthase from Thermotoga sp. (strain RQ2).